The primary structure comprises 662 residues: DNA ligase (662 aa).

Residues D34–D38, S83–I84, and E113 contribute to the NAD(+) site. The active-site N6-AMP-lysine intermediate is K115. The NAD(+) site is built by R136, E172, K286, and K310. C404, C407, C422, and C427 together coordinate Zn(2+). In terms of domain architecture, BRCT spans R583–N662.

The protein belongs to the NAD-dependent DNA ligase family. LigA subfamily. Requires Mg(2+) as cofactor. The cofactor is Mn(2+).

It carries out the reaction NAD(+) + (deoxyribonucleotide)n-3'-hydroxyl + 5'-phospho-(deoxyribonucleotide)m = (deoxyribonucleotide)n+m + AMP + beta-nicotinamide D-nucleotide.. DNA ligase that catalyzes the formation of phosphodiester linkages between 5'-phosphoryl and 3'-hydroxyl groups in double-stranded DNA using NAD as a coenzyme and as the energy source for the reaction. It is essential for DNA replication and repair of damaged DNA. The chain is DNA ligase from Chlamydia felis (strain Fe/C-56) (Chlamydophila felis).